The sequence spans 492 residues: AAA-ATPase At3g28520 (492 aa).

Residues 7 to 25 (IWGFTSTTMASIMFLWPMY) traverse the membrane as a helical segment. 249–256 (GPPGTGKS) provides a ligand contact to ATP. 2 disordered regions span residues 313–334 (KKKK…LKRV) and 462–492 (KIEK…MVTK). Composition is skewed to basic and acidic residues over residues 323–332 (EEKKEAENLK) and 462–484 (KIEK…EKQN).

The protein belongs to the AAA ATPase family. BCS1 subfamily. The cofactor is Mg(2+).

It localises to the membrane. It catalyses the reaction ATP + H2O = ADP + phosphate + H(+). The chain is AAA-ATPase At3g28520 from Arabidopsis thaliana (Mouse-ear cress).